A 181-amino-acid polypeptide reads, in one-letter code: Trafficking protein particle complex subunit 3 homolog (181 aa).

Cysteine 70 carries the S-palmitoyl cysteine lipid modification.

This sequence belongs to the TRAPP small subunits family. BET3 subfamily. In terms of assembly, homodimer. Part of the multisubunit TRAPP (transport protein particle) complex.

The protein resides in the golgi apparatus. Its subcellular location is the cis-Golgi network. The protein localises to the endoplasmic reticulum. Its function is as follows. May play a role in vesicular transport from endoplasmic reticulum to Golgi. Required for the systemic spread of the RNAi response. In Caenorhabditis briggsae, this protein is Trafficking protein particle complex subunit 3 homolog.